A 166-amino-acid chain; its full sequence is Large ribosomal subunit protein uL10 (166 aa).

The protein belongs to the universal ribosomal protein uL10 family. As to quaternary structure, part of the ribosomal stalk of the 50S ribosomal subunit. The N-terminus interacts with L11 and the large rRNA to form the base of the stalk. The C-terminus forms an elongated spine to which L12 dimers bind in a sequential fashion forming a multimeric L10(L12)X complex.

Functionally, forms part of the ribosomal stalk, playing a central role in the interaction of the ribosome with GTP-bound translation factors. The polypeptide is Large ribosomal subunit protein uL10 (Streptococcus gordonii (strain Challis / ATCC 35105 / BCRC 15272 / CH1 / DL1 / V288)).